The primary structure comprises 563 residues: Protein NOXP20 (563 aa).

Positions Met1 to Gly84 are disordered. The segment covering Ala56–Pro68 has biased composition (low complexity). Ser120 carries the phosphoserine modification. A disordered region spans residues Val165–Arg206. A compositionally biased stretch (polar residues) spans Asn166–Asn179. Thr185 and Thr189 each carry phosphothreonine. A Phosphoserine modification is found at Ser196. Thr199 is subject to Phosphothreonine. Ser202 and Ser261 each carry phosphoserine. Residues Ala343–Arg367 adopt a coiled-coil conformation. The segment at Ser411–Lys436 is disordered.

This sequence belongs to the FAM114 family.

It is found in the cytoplasm. Its function is as follows. May play a role in neuronal cell development. This is Protein NOXP20 (FAM114A1) from Homo sapiens (Human).